The following is a 531-amino-acid chain: MDTVQSLINITLPQPEIEAPAKLEYDRTRILSIAAVVFLGYLLLRPLFDKRLPLPPAPTRLPLLGNLHQFPASNLWGTYKKWHNQYGPIMGLKYGQRTVISLGSHEVAKDLLEKRSNIYSSRPNFVVAKAFSNDANSALIAYDERWKTHHSLLSTFMNARMAAKYQFLQNIESKQALHDLMSVQGTEWMQVFHRYTISVTFTLAYGERIPELYDERILFIDELTETISSNVEKPKNLIADCFPTISILPSALMRWKKQGKVYHDSAMKFFLDNHAKALQKPGWNWVKESQTSEDANKLDREEVIYLIGVLIEAGGSTMKTFEFFVMASILFPEKVRLVQEEVDRVVGADRLPTWDDSPNLPYLHAFIREVQRWRPIFPFGVPHSNLKEDVYNGFRIPKDSVVLANHWAMDSDHKVFENADDFVPERWLEDSKLPFLAFGYGKRVCPGQHIAKRSLFIIISRTLWAYNITHAYEKGKKVEIDPHAIVQNILAGPVPFKGTFTPRDADRYRILEEEFSNIGQDEANIWDVCKP.

Residues 30–48 (ILSIAAVVFLGYLLLRPLF) form a helical membrane-spanning segment. Residue Cys445 participates in heme binding.

Belongs to the cytochrome P450 family. The cofactor is heme.

It localises to the membrane. It carries out the reaction silphinene-15-oate + 2 reduced [NADPH--hemoprotein reductase] + 2 O2 = gamma-lactone-2-keto[5.5.5.5]fenestrane + 2 oxidized [NADPH--hemoprotein reductase] + 3 H2O + H(+). The protein operates within secondary metabolite biosynthesis; terpenoid biosynthesis. Its function is as follows. Cytochrome P450 monooxygenase; part of the gene cluster that mediates the biosynthesis of penifulvin A, a potent insecticidal sesquiterpene that features a [5.5.5.6]dioxafenestrane ring. Within the pathway, peniB catalyzes the multi-step oxidation of silphinene to synthesize gamma-lactone-2-keto[5.5.5.5]fenestrane, including oxidation of the C15 methylgroup in silphinene to form silphinene-15-oic acid, activationof the C1-C2 double bond to form the gamma-lactone-2-hydroxy[5.5.5.5]fenestrane, and dehydrogenation of the hydroxy group at C2 of gamma-lactone-2-hydroxy[5.5.5.5]fenestrane to generate gamma-lactone-2-keto[5.5.5.5]fenestrane. The first step of the pathway is performed by the sesquiterpene cyclase peniA that generates the angular triquinane scaffold silphinene via cyclization of the linear farnesyl pyrophosphate (FPP). The cytochrome P450 monooxygenase peniB and the flavin-dependent monooxygenase peniC then catalyze a series of oxidation reactions to transform silphinene into penifulvin A. This chain is Cytochrome P450 monooxygenase peniB, found in Penicillium patulum (Penicillium griseofulvum).